Reading from the N-terminus, the 794-residue chain is E3 ubiquitin-protein ligase wwp-1 (794 aa).

The span at 1-16 (MARNEPSSQQPSSSGS) shows a compositional bias: low complexity. Disordered stretches follow at residues 1-31 (MARN…KPSK) and 155-198 (RSAG…AAPT). One can recognise a C2 domain in the interval 10 to 124 (QPSSSGSNGT…TRNENGEFKN (115 aa)). Residues 17-27 (NGTPAQQNGSA) are compositionally biased toward polar residues. A compositionally biased stretch (low complexity) spans 161-186 (AETAASASSEASTSNGVATSSSARRP). WW domains lie at 219–252 (EQLP…RPST), 253–286 (QPLP…RPTA), 324–358 (GPLP…DPRT), and 366–399 (QPLP…DPRT). An HECT domain is found at 460–794 (NAVDLRRRLY…IEMTEGFGNE (335 aa)). C762 acts as the Glycyl thioester intermediate in catalysis.

As to quaternary structure, interacts (via WW domains) with Kruppel-like factor klf-1. Interacts with ubiquitin-conjugating enzyme E2 ubc-18. As to expression, expressed in neurons localized in the head and tail of adults.

The catalysed reaction is S-ubiquitinyl-[E2 ubiquitin-conjugating enzyme]-L-cysteine + [acceptor protein]-L-lysine = [E2 ubiquitin-conjugating enzyme]-L-cysteine + N(6)-ubiquitinyl-[acceptor protein]-L-lysine.. The protein operates within protein modification; protein ubiquitination. Its function is as follows. E3 ubiquitin-protein ligase which accepts ubiquitin from an E2 ubiquitin-conjugating enzyme in the form of a thioester and then directly transfers the ubiquitin to targeted substrates. Ubiquitinates klf-1. Required for diet restriction-mediated lifespan extension, acting in concert with Kruppel-like factor klf-1 in the intestine to perhaps modulate genes involved in lipid metabolism. Probably acting downstream of the Insulin/IGF-1-like signaling (IIS) mediated pathway, plays a role in the immune response to infection by the Gram-negative bacterium P.aeruginosa, at least partly in response to bacterial pore-forming toxins. The polypeptide is E3 ubiquitin-protein ligase wwp-1 (Caenorhabditis elegans).